The chain runs to 199 residues: MKPLLILASASPFRRALLSNAGLAFEARAAAIDERALEQPLEASGASPADVALALAEAKAKDVARYFSDALVIGSDQTMSLGTRVYHKPRDMTEAAEHLRSLSGRMHSLNSAIVLVRNDEVVWRHVSTANMTVRPLSDGFIDRHLAKVGEKALTSVGAYQLEGEGIQLFERIEGDYFTILGLPMLPLLSKLRELGAIDA.

The active-site Proton acceptor is Asp-76.

Belongs to the Maf family. YceF subfamily. It depends on a divalent metal cation as a cofactor.

It is found in the cytoplasm. The enzyme catalyses N(7)-methyl-GTP + H2O = N(7)-methyl-GMP + diphosphate + H(+). Nucleoside triphosphate pyrophosphatase that hydrolyzes 7-methyl-GTP (m(7)GTP). May have a dual role in cell division arrest and in preventing the incorporation of modified nucleotides into cellular nucleic acids. The chain is 7-methyl-GTP pyrophosphatase from Rhizobium meliloti (strain 1021) (Ensifer meliloti).